The chain runs to 1403 residues: DNA-directed RNA polymerase subunit beta' (1403 aa).

Zn(2+)-binding residues include Cys-69, Cys-71, Cys-84, and Cys-87. The Mg(2+) site is built by Asp-461, Asp-463, and Asp-465. The Zn(2+) site is built by Cys-818, Cys-891, Cys-898, and Cys-901. Residues 1384 to 1403 (LELLRNEGEDETGNEELVAE) form a disordered region. Residues 1391-1403 (GEDETGNEELVAE) are compositionally biased toward acidic residues.

It belongs to the RNA polymerase beta' chain family. In terms of assembly, the RNAP catalytic core consists of 2 alpha, 1 beta, 1 beta' and 1 omega subunit. When a sigma factor is associated with the core the holoenzyme is formed, which can initiate transcription. Mg(2+) is required as a cofactor. Zn(2+) serves as cofactor.

The enzyme catalyses RNA(n) + a ribonucleoside 5'-triphosphate = RNA(n+1) + diphosphate. Its function is as follows. DNA-dependent RNA polymerase catalyzes the transcription of DNA into RNA using the four ribonucleoside triphosphates as substrates. In Koribacter versatilis (strain Ellin345), this protein is DNA-directed RNA polymerase subunit beta'.